The following is a 968-amino-acid chain: RNA polymerase-associated protein RapA (968 aa).

The Helicase ATP-binding domain occupies 164–334 (DVGRRHAPRV…FARLRLLDPD (171 aa)). 177-184 (DEVGLGKT) lines the ATP pocket. Positions 280–283 (DEAH) match the DEAH box motif. Residues 490-643 (RVEWLMGYLT…HTCPTGRAVY (154 aa)) form the Helicase C-terminal domain.

It belongs to the SNF2/RAD54 helicase family. RapA subfamily. In terms of assembly, interacts with the RNAP. Has a higher affinity for the core RNAP than for the holoenzyme. Its ATPase activity is stimulated by binding to RNAP.

Functionally, transcription regulator that activates transcription by stimulating RNA polymerase (RNAP) recycling in case of stress conditions such as supercoiled DNA or high salt concentrations. Probably acts by releasing the RNAP, when it is trapped or immobilized on tightly supercoiled DNA. Does not activate transcription on linear DNA. Probably not involved in DNA repair. In Erwinia tasmaniensis (strain DSM 17950 / CFBP 7177 / CIP 109463 / NCPPB 4357 / Et1/99), this protein is RNA polymerase-associated protein RapA.